The following is a 313-amino-acid chain: Porphobilinogen deaminase (313 aa).

Cysteine 242 bears the S-(dipyrrolylmethanemethyl)cysteine mark.

This sequence belongs to the HMBS family. As to quaternary structure, monomer. Dipyrromethane is required as a cofactor.

It catalyses the reaction 4 porphobilinogen + H2O = hydroxymethylbilane + 4 NH4(+). It participates in porphyrin-containing compound metabolism; protoporphyrin-IX biosynthesis; coproporphyrinogen-III from 5-aminolevulinate: step 2/4. Tetrapolymerization of the monopyrrole PBG into the hydroxymethylbilane pre-uroporphyrinogen in several discrete steps. The chain is Porphobilinogen deaminase from Proteus mirabilis (strain HI4320).